The chain runs to 186 residues: uncharacterized protein (186 aa).

Belongs to the MG032/MG096/MG288 family.

This is an uncharacterized protein from Mycoplasma pneumoniae (strain ATCC 29342 / M129 / Subtype 1) (Mycoplasmoides pneumoniae).